A 277-amino-acid chain; its full sequence is Phosphoenolpyruvate synthase regulatory protein (277 aa).

Residue 157 to 164 (GVSRCGKT) coordinates ADP.

The protein belongs to the pyruvate, phosphate/water dikinase regulatory protein family. PSRP subfamily.

The catalysed reaction is [pyruvate, water dikinase] + ADP = [pyruvate, water dikinase]-phosphate + AMP + H(+). It catalyses the reaction [pyruvate, water dikinase]-phosphate + phosphate + H(+) = [pyruvate, water dikinase] + diphosphate. In terms of biological role, bifunctional serine/threonine kinase and phosphorylase involved in the regulation of the phosphoenolpyruvate synthase (PEPS) by catalyzing its phosphorylation/dephosphorylation. The polypeptide is Phosphoenolpyruvate synthase regulatory protein (Salmonella agona (strain SL483)).